The sequence spans 687 residues: Follicle-stimulating hormone receptor (687 aa).

A signal peptide spans 1-17 (MALLLVSLLAFLSLGSG). An LRRNT domain is found at 18-46 (CHHQVCHYSNRVFLCQESKVTEIPSDLPR). The Extracellular segment spans residues 18–358 (CHHQVCHYSN…EDIMGYDILR (341 aa)). Residues C23 and C32 are joined by a disulfide bond. LRR repeat units lie at residues 49-72 (LELR…FGDL), 73-97 (KKIE…LPKL), 98-118 (HEIR…AFQN), 119-143 (LPNL…KIQS), 144-169 (LQKV…MGLS), 170-192 (FESM…AFNG), 193-216 (TQLD…VFQG), 217-240 (ASGP…GLEN), and 241-259 (LKKL…PSLE). 2 N-linked (GlcNAc...) asparagine glycosylation sites follow: N191 and N199. 4 disulfides stabilise this stretch: C275–C338, C276–C292, C276–C348, and C292–C330. Residue N293 is glycosylated (N-linked (GlcNAc...) asparagine). Y327 is subject to Sulfotyrosine. A helical membrane pass occupies residues 359–379 (VLIWFISILAITGNIIVLVIL). Over 380–390 (ITSQYKLTVPR) the chain is Cytoplasmic. A helical membrane pass occupies residues 391–413 (FLMCNLAFADLCIGIYLLLIASV). Topologically, residues 414 to 435 (DIHTKSQYHNYAIDWQTGAGCD) are extracellular. A disulfide bond links C434 and C509. A helical membrane pass occupies residues 436–457 (AAGFFTVFGSELSVYTLTAITL). Over 458–477 (ERWHTITHAMQLECKVQLRH) the chain is Cytoplasmic. Residues 478-500 (AASVMLVGWIFGFGVGLLPIFGI) form a helical membrane-spanning segment. Topologically, residues 501–520 (STYMKVSICLPMDIDSPLSQ) are extracellular. A helical transmembrane segment spans residues 521-542 (LYVMSLLVLNVLAFVVICGCYT). Over 543 to 565 (HIYLTVRNPNIVSSSSDTKIAKR) the chain is Cytoplasmic. A helical transmembrane segment spans residues 566–589 (MGILIFTDFLCMAPISFFGISASL). Residues 590–600 (KVALITVSKSK) lie on the Extracellular side of the membrane. The chain crosses the membrane as a helical span at residues 601 to 622 (ILLVLFYPINSCANPFLYAIFT). The Cytoplasmic portion of the chain corresponds to 623 to 687 (KNFRRDFFIL…LVPLSHLAQN (65 aa)).

This sequence belongs to the G-protein coupled receptor 1 family. FSH/LSH/TSH subfamily. As to quaternary structure, homotrimer. Functions as a homotrimer binding the FSH hormone heterodimer composed of CGA and FSHB. Interacts with ARRB2. Interacts with APPL2; interaction is independent of follicle stimulating hormone stimulation. Post-translationally, N-glycosylated; indirectly required for FSH-binding, possibly via a conformational change that allows high affinity binding of hormone. Sulfated.

It localises to the cell membrane. Its function is as follows. G protein-coupled receptor for follitropin, the follicle-stimulating hormone. Through cAMP production activates the downstream PI3K-AKT and ERK1/ERK2 signaling pathways. This chain is Follicle-stimulating hormone receptor (FSHR), found in Equus asinus (Donkey).